A 100-amino-acid chain; its full sequence is Putative pterin-4-alpha-carbinolamine dehydratase (100 aa).

This sequence belongs to the pterin-4-alpha-carbinolamine dehydratase family.

It carries out the reaction (4aS,6R)-4a-hydroxy-L-erythro-5,6,7,8-tetrahydrobiopterin = (6R)-L-erythro-6,7-dihydrobiopterin + H2O. This Bradyrhizobium sp. (strain ORS 278) protein is Putative pterin-4-alpha-carbinolamine dehydratase.